Reading from the N-terminus, the 40-residue chain is Photosystem II reaction center protein J (40 aa).

A helical transmembrane segment spans residues 8–28 (IPLWLIGTVTGIIVIGLIGIF).

The protein belongs to the PsbJ family. As to quaternary structure, PSII is composed of 1 copy each of membrane proteins PsbA, PsbB, PsbC, PsbD, PsbE, PsbF, PsbH, PsbI, PsbJ, PsbK, PsbL, PsbM, PsbT, PsbX, PsbY, PsbZ, Psb30/Ycf12, at least 3 peripheral proteins of the oxygen-evolving complex and a large number of cofactors. It forms dimeric complexes.

It is found in the plastid. Its subcellular location is the chloroplast thylakoid membrane. Functionally, one of the components of the core complex of photosystem II (PSII). PSII is a light-driven water:plastoquinone oxidoreductase that uses light energy to abstract electrons from H(2)O, generating O(2) and a proton gradient subsequently used for ATP formation. It consists of a core antenna complex that captures photons, and an electron transfer chain that converts photonic excitation into a charge separation. This is Photosystem II reaction center protein J from Piper cenocladum (Ant piper).